We begin with the raw amino-acid sequence, 339 residues long: Ribosome biogenesis protein BRX1 homolog (339 aa).

The tract at residues 1–34 (MSAYKRKRGSLPEVATNTKKAKKQLAGSEQEATA) is disordered. In terms of domain architecture, Brix spans 53-242 (ERVLIFSSRG…LIKIFKGSFG (190 aa)). The segment at 304–339 (AEEKPQVIETEPPAPKPKMKRKDKQFKRQRMAKKRM) is disordered. Positions 320-339 (PKMKRKDKQFKRQRMAKKRM) are enriched in basic residues.

It belongs to the BRX1 family. In terms of tissue distribution, ubiquitous.

It is found in the nucleus. The protein localises to the nucleolus. In terms of biological role, required for biogenesis of the 60S ribosomal subunit. The sequence is that of Ribosome biogenesis protein BRX1 homolog (brix1) from Xenopus laevis (African clawed frog).